Here is a 1153-residue protein sequence, read N- to C-terminus: ATP-dependent helicase/deoxyribonuclease subunit B (1153 aa).

In terms of domain architecture, UvrD-like helicase ATP-binding spans Met1–Leu289. Gly8–Ser15 is a binding site for ATP. The region spanning Leu269–Val583 is the UvrD-like helicase C-terminal domain. [4Fe-4S] cluster contacts are provided by Cys784, Cys1110, Cys1113, and Cys1119.

This sequence belongs to the helicase family. AddB/RexB type 1 subfamily. In terms of assembly, heterodimer of AddA and AddB. Mg(2+) is required as a cofactor. Requires [4Fe-4S] cluster as cofactor.

The heterodimer acts as both an ATP-dependent DNA helicase and an ATP-dependent, dual-direction single-stranded exonuclease. Recognizes the chi site generating a DNA molecule suitable for the initiation of homologous recombination. The AddB subunit has 5' -&gt; 3' nuclease activity but not helicase activity. The polypeptide is ATP-dependent helicase/deoxyribonuclease subunit B (Staphylococcus saprophyticus subsp. saprophyticus (strain ATCC 15305 / DSM 20229 / NCIMB 8711 / NCTC 7292 / S-41)).